A 98-amino-acid chain; its full sequence is NADH-ubiquinone oxidoreductase chain 4L (98 aa).

3 helical membrane passes run 1-21 (MPVV…GLLI), 29-49 (SLLC…VTVL), and 61-81 (IILL…LVMV).

It belongs to the complex I subunit 4L family. In terms of assembly, core subunit of respiratory chain NADH dehydrogenase (Complex I) which is composed of 45 different subunits.

It localises to the mitochondrion inner membrane. It catalyses the reaction a ubiquinone + NADH + 5 H(+)(in) = a ubiquinol + NAD(+) + 4 H(+)(out). Functionally, core subunit of the mitochondrial membrane respiratory chain NADH dehydrogenase (Complex I) which catalyzes electron transfer from NADH through the respiratory chain, using ubiquinone as an electron acceptor. Part of the enzyme membrane arm which is embedded in the lipid bilayer and involved in proton translocation. This Ursus americanus (American black bear) protein is NADH-ubiquinone oxidoreductase chain 4L (MT-ND4L).